The chain runs to 371 residues: Mannonate dehydratase (371 aa).

The protein belongs to the mannonate dehydratase family. Fe(2+) serves as cofactor. It depends on Mn(2+) as a cofactor.

It catalyses the reaction D-mannonate = 2-dehydro-3-deoxy-D-gluconate + H2O. Its pathway is carbohydrate metabolism; pentose and glucuronate interconversion. Functionally, catalyzes the dehydration of D-mannonate. This chain is Mannonate dehydratase, found in Geobacillus thermodenitrificans (strain NG80-2).